The primary structure comprises 178 residues: Signaling threshold-regulating transmembrane adapter 1 (178 aa).

Topologically, residues 1-23 (MSRENNCTTADLAWGIPSITQAW) are extracellular. Residue Asn-6 is glycosylated (N-linked (GlcNAc...) asparagine). A helical; Signal-anchor for type III membrane protein membrane pass occupies residues 24 to 44 (GLWALFGVVTMLLLISLAALL). The Cytoplasmic portion of the chain corresponds to 45-178 (SQWTRGRRRT…AYANSQPAPS (134 aa)). Residues Ser-62 and Ser-65 each carry the phosphoserine modification. Tyr-72 carries the phosphotyrosine modification. An interaction with GRB2 region spans residues 72 to 75 (YGNL). The disordered stretch occupies residues 81 to 102 (GRLSEESRSEEQDPSSGGLARG). Ser-84, Ser-87, and Ser-89 each carry phosphoserine. The residue at position 109 (Tyr-109) is a Phosphotyrosine. At Thr-126 the chain carries Phosphothreonine. The interaction with PTPN11 stretch occupies residues 128–133 (IKYCEV). Phosphotyrosine is present on residues Tyr-130 and Tyr-151. An interaction with CSK region spans residues 151 to 154 (YASV). Ser-164 bears the Phosphoserine mark. Tyr-170 is subject to Phosphotyrosine. The segment at 170-173 (YANS) is interaction with GRB2.

In terms of assembly, homodimer; disulfide-linked. When phosphorylated, interacts with PTPN11/SHP2, GRB2 and CSK. In terms of processing, phosphorylated on tyrosines upon TCR activation; which promotes recruitment of PTPN11, GRB2 and CSK. In terms of tissue distribution, lymph node, spleen and thymus.

It localises to the cell membrane. Functionally, negatively regulates T-cell antigen receptor (TCR)-mediated signaling. Involved in positive selection of T-cells. The polypeptide is Signaling threshold-regulating transmembrane adapter 1 (Sit1) (Rattus norvegicus (Rat)).